Reading from the N-terminus, the 139-residue chain is Small ribosomal subunit protein uS12m (139 aa).

The N-terminal 29 residues, 1 to 29, are a transit peptide targeting the mitochondrion; it reads MSWPGLLYGLTTSLSRGLALAPQLWAARS.

This sequence belongs to the universal ribosomal protein uS12 family. Component of the mitochondrial ribosome small subunit (28S) which comprises a 12S rRNA and about 30 distinct proteins.

It is found in the mitochondrion. This chain is Small ribosomal subunit protein uS12m (Mrps12), found in Mus musculus (Mouse).